Here is a 431-residue protein sequence, read N- to C-terminus: MAACSRGLVARPFDLTARGAAHWPCPAPRRRAIRCCCRAQQEPRRRLSKAAAAAPERTEEWRIDGNKPAAAARGRRRASLTAMPSLPFPSPRSRRQWKQQNFYPRCTPRGPAPQSRDTPPKRDTGIASEKEWGINLLDEAVKESGTNEDGSTWYRESGDDRGDNGYRCRWARMGGQSHDGTTEWKETWWEKSDWTGYKELGAEKSGKNGAGDSWWEKWKEVLYQDEWSNLARIERSAEKQAKSGAENAGWYEKWWEKYDAKGWTEKGAHKYGRLNEQSWWERWGEHYDGRGFVLKWTDKWAETDLGTKWGDKWEEKFFAGIGSRQGETWHVSPGGDRWSRTWGEEHFGNGKVHKYGKSTTGESWDLVVDEETYYEAEPHYGWADVVGDSTQLLSIQPVERPPGVYPTIDFSASSPAPPSDDPPGMPPSPLE.

A chloroplast-targeting transit peptide spans methionine 1–glycine 19. 2 disordered regions span residues glycine 65–isoleucine 126 and glycine 403–glutamate 431. A compositionally biased stretch (pro residues) spans proline 415–glutamate 431.

This sequence belongs to the ESV1 family.

The protein resides in the plastid. It is found in the chloroplast stroma. Binds preferentially to highly ordered alpha-glucans, such as starch and crystalline maltodextrins. Involved in the organization of the starch granule matrix, thus influencing starch turnover by modulating the accessibility of starch polymers to modifying and degrading enzymes. Required for the control of starch degradation in leaves and starch distribution in nonphotosynthetic parts. Promotes gravitropic responses, negative in shoots but positive in roots, by facilitating starch granules (statoliths) formation in hypocotyls and roots columella. Facilitates tight packing of starch granules in grains. This chain is Protein EARLY STARVATION 1, chloroplastic, found in Oryza sativa subsp. indica (Rice).